A 148-amino-acid chain; its full sequence is MAHLLLLHGPNLNLLGTREPEIYGRITLPQIDAALAERATAAGHGLSSLQSNAEHVLIERIHATPEDGTAFILINPGAFTHTSVALRDALLAVALPFVEIHLSNPYTREPFRHHSYLADKALGVVCGFGVDSYRIALEGVIARLGSDV.

Tyrosine 23 acts as the Proton acceptor in catalysis. Positions 75, 81, and 88 each coordinate substrate. Histidine 101 serves as the catalytic Proton donor. Residues 102–103 and arginine 112 each bind substrate; that span reads LS.

The protein belongs to the type-II 3-dehydroquinase family. Homododecamer.

The enzyme catalyses 3-dehydroquinate = 3-dehydroshikimate + H2O. The protein operates within metabolic intermediate biosynthesis; chorismate biosynthesis; chorismate from D-erythrose 4-phosphate and phosphoenolpyruvate: step 3/7. Catalyzes a trans-dehydration via an enolate intermediate. The protein is 3-dehydroquinate dehydratase of Xylella fastidiosa (strain 9a5c).